Consider the following 147-residue polypeptide: Transcriptional repressor NrdR (147 aa).

Residues 3-34 (CLFCRSDDTKVIDSRTSEDGISIRRRRECQLC) fold into a zinc finger. Residues 46-136 (LTVIKRNGTS…VYQDFDSLED (91 aa)) form the ATP-cone domain.

This sequence belongs to the NrdR family. Zn(2+) is required as a cofactor.

Negatively regulates transcription of bacterial ribonucleotide reductase nrd genes and operons by binding to NrdR-boxes. This is Transcriptional repressor NrdR from Tropheryma whipplei (strain TW08/27) (Whipple's bacillus).